The sequence spans 284 residues: Tryptophan 2,3-dioxygenase (284 aa).

Residues 53–57 and R119 contribute to the substrate site; that span reads FIIQH. H242 provides a ligand contact to heme. Residue T256 participates in substrate binding.

The protein belongs to the tryptophan 2,3-dioxygenase family. Homotetramer. Heme serves as cofactor.

It catalyses the reaction L-tryptophan + O2 = N-formyl-L-kynurenine. It participates in amino-acid degradation; L-tryptophan degradation via kynurenine pathway; L-kynurenine from L-tryptophan: step 1/2. The protein operates within siderophore biosynthesis; quinolobactin biosynthesis. Its function is as follows. Heme-dependent dioxygenase that catalyzes the oxidative cleavage of the L-tryptophan (L-Trp) pyrrole ring and converts L-tryptophan to N-formyl-L-kynurenine. Catalyzes the oxidative cleavage of the indole moiety. Required for synthesis of the siderophore quinolobactin. The protein is Tryptophan 2,3-dioxygenase of Pseudomonas fluorescens.